A 421-amino-acid chain; its full sequence is ATP phosphoribosyltransferase regulatory subunit (421 aa).

Belongs to the class-II aminoacyl-tRNA synthetase family. HisZ subfamily. As to quaternary structure, heteromultimer composed of HisG and HisZ subunits.

Its subcellular location is the cytoplasm. The protein operates within amino-acid biosynthesis; L-histidine biosynthesis; L-histidine from 5-phospho-alpha-D-ribose 1-diphosphate: step 1/9. Required for the first step of histidine biosynthesis. May allow the feedback regulation of ATP phosphoribosyltransferase activity by histidine. In Clostridium novyi (strain NT), this protein is ATP phosphoribosyltransferase regulatory subunit.